The sequence spans 208 residues: Large ribosomal subunit protein bL25 (208 aa).

Low complexity predominate over residues 186-201 (PAGEKSAAAEEGAAAA). The interval 186–208 (PAGEKSAAAEEGAAAAGEDKPAA) is disordered.

The protein belongs to the bacterial ribosomal protein bL25 family. CTC subfamily. As to quaternary structure, part of the 50S ribosomal subunit; part of the 5S rRNA/L5/L18/L25 subcomplex. Contacts the 5S rRNA. Binds to the 5S rRNA independently of L5 and L18.

In terms of biological role, this is one of the proteins that binds to the 5S RNA in the ribosome where it forms part of the central protuberance. The chain is Large ribosomal subunit protein bL25 from Ralstonia pickettii (strain 12J).